A 576-amino-acid chain; its full sequence is 5'-nucleotidase (576 aa).

Residues 1–28 (MRPAAATAPKWLLLALSALLPLWPTAKS) form the signal peptide. Positions 38 and 40 each coordinate Zn(2+). A disulfide bond links cysteine 53 and cysteine 59. Residue asparagine 55 is glycosylated (N-linked (GlcNAc...) asparagine). The Zn(2+) site is built by aspartate 87, asparagine 119, histidine 222, and histidine 245. N-linked (GlcNAc...) asparagine glycosylation is found at asparagine 313, asparagine 335, and asparagine 349. 2 cysteine pairs are disulfide-bonded: cysteine 355–cysteine 360 and cysteine 367–cysteine 389. Arginine 356 contributes to the AMP binding site. IMP is bound at residue arginine 356. Residues asparagine 392 and arginine 397 each contribute to the AMP site. The IMP site is built by asparagine 392 and arginine 397. N-linked (GlcNAc...) asparagine glycosylation is present at asparagine 405. Phenylalanine 419 serves as a coordination point for AMP. Phenylalanine 419 lines the IMP pocket. Cysteine 478 and cysteine 481 form a disulfide bridge. Tyrosine 502 and aspartate 508 together coordinate AMP. IMP contacts are provided by tyrosine 502 and aspartate 508. A lipid anchor (GPI-anchor amidated serine) is attached at serine 551. The propeptide at 552 to 576 (AASHYQGSFPLIILSFWAVILVLYQ) is removed in mature form.

This sequence belongs to the 5'-nucleotidase family. Homodimer. The cofactor is Zn(2+). Expressed in the brain.

It localises to the cell membrane. It carries out the reaction a ribonucleoside 5'-phosphate + H2O = a ribonucleoside + phosphate. The enzyme catalyses a 2'-deoxyribonucleoside 5'-phosphate + H2O = a 2'-deoxyribonucleoside + phosphate. The catalysed reaction is dTMP + H2O = thymidine + phosphate. It catalyses the reaction CMP + H2O = cytidine + phosphate. It carries out the reaction IMP + H2O = inosine + phosphate. The enzyme catalyses AMP + H2O = adenosine + phosphate. The catalysed reaction is GMP + H2O = guanosine + phosphate. It catalyses the reaction UMP + H2O = uridine + phosphate. It carries out the reaction dAMP + H2O = 2'-deoxyadenosine + phosphate. The enzyme catalyses dCMP + H2O = 2'-deoxycytidine + phosphate. Its function is as follows. Catalyzes the hydrolysis of nucleotide monophosphates, releasing inorganic phosphate and the corresponding nucleoside. AMP is the preferred substrate but can also hydrolyze CMP and GMP. Shows a preference for ribonucleotide monophosphates over their equivalent deoxyribose forms. Other substrates include IMP, UMP, dAMP, dCMP, dTMP, NAD and NMN. The protein is 5'-nucleotidase (Nt5e) of Rattus norvegicus (Rat).